A 262-amino-acid polypeptide reads, in one-letter code: tRNA (guanine-N(7)-)-methyltransferase (262 aa).

The interval 1-58 (MLPQDTNTDPLPGDDAESASGKSADASQGTPNPGDEVAHPRRIRSFVRRAGRTSTGQQ) is disordered. Positions 40-51 (PRRIRSFVRRAG) are enriched in basic residues. Residues Glu-92, Glu-117, Asp-144, and Asp-167 each contribute to the S-adenosyl-L-methionine site. Asp-167 is a catalytic residue. A substrate-binding site is contributed by Lys-171. The interval 173 to 178 (RHNKRR) is interaction with RNA. Residues Asp-203 and 241–244 (TKFE) contribute to the substrate site.

It belongs to the class I-like SAM-binding methyltransferase superfamily. TrmB family.

It carries out the reaction guanosine(46) in tRNA + S-adenosyl-L-methionine = N(7)-methylguanosine(46) in tRNA + S-adenosyl-L-homocysteine. It participates in tRNA modification; N(7)-methylguanine-tRNA biosynthesis. Its function is as follows. Catalyzes the formation of N(7)-methylguanine at position 46 (m7G46) in tRNA. The protein is tRNA (guanine-N(7)-)-methyltransferase of Cupriavidus metallidurans (strain ATCC 43123 / DSM 2839 / NBRC 102507 / CH34) (Ralstonia metallidurans).